The chain runs to 270 residues: Shikimate dehydrogenase (NADP(+)) (270 aa).

Shikimate-binding positions include 15–17 (SLS) and Thr62. The active-site Proton acceptor is Lys66. The shikimate site is built by Asn87 and Asp102. Residues 126–130 (GAGGS), 149–154 (NRTVGR), and Ile210 contribute to the NADP(+) site. Residue Tyr212 coordinates shikimate. Gly233 is a binding site for NADP(+).

Belongs to the shikimate dehydrogenase family. As to quaternary structure, homodimer.

The enzyme catalyses shikimate + NADP(+) = 3-dehydroshikimate + NADPH + H(+). It functions in the pathway metabolic intermediate biosynthesis; chorismate biosynthesis; chorismate from D-erythrose 4-phosphate and phosphoenolpyruvate: step 4/7. Its function is as follows. Involved in the biosynthesis of the chorismate, which leads to the biosynthesis of aromatic amino acids. Catalyzes the reversible NADPH linked reduction of 3-dehydroshikimate (DHSA) to yield shikimate (SA). The sequence is that of Shikimate dehydrogenase (NADP(+)) from Hyphomonas neptunium (strain ATCC 15444).